A 720-amino-acid chain; its full sequence is Receptor-like protein CLAVATA2 (720 aa).

An N-terminal signal peptide occupies residues 1–25 (MIKIADFTLFFFIFVFSPSLPLAQS). The N-cap stretch occupies residues 26–92 (QLPDLDPQDK…LNLSSQIHPS (67 aa)). The Extracellular segment spans residues 26–686 (QLPDLDPQDK…QNELVEGPIS (661 aa)). 6 N-linked (GlcNAc...) asparagine glycosylation sites follow: Asn49, Asn62, Asn84, Asn108, Asn127, and Asn168. A disulfide bond links Cys60 and Cys68. 21 LRR repeats span residues 96-122 (LSSL…SLRN), 124-144 (RTLN…FVSL), 146-168 (ELRE…WFGN), 170-194 (SMNL…LLYL), 195-217 (KSLK…FQQP), 219-238 (VVLN…FYAS), 239-263 (RPSL…LGSL), 264-287 (KELS…LMFS), 288-311 (EKLV…ISET), 314-338 (KLGL…ITEL), 339-362 (KSLQ…IGNL), 364-386 (YLQV…IVGC), 388-410 (QLLA…LDAL), 411-436 (DSLK…GLKS), 438-458 (EIVD…ITKW), 459-482 (SNLK…LFKF), 484-506 (KIQM…NLNS), 547-571 (LLSM…LFRQ), 573-594 (NIEY…LEKL), 595-617 (PRLK…NISA), and 619-641 (PGLT…KEGL). A glycan (N-linked (GlcNAc...) asparagine) is linked at Asn206. An N-linked (GlcNAc...) asparagine glycan is attached at Asn270. Asn361 carries an N-linked (GlcNAc...) asparagine glycan. Asn398 carries N-linked (GlcNAc...) asparagine glycosylation. An N-linked (GlcNAc...) asparagine glycan is attached at Asn446. Residue Asn505 is glycosylated (N-linked (GlcNAc...) asparagine). Residues Asn578, Asn614, and Asn625 are each glycosylated (N-linked (GlcNAc...) asparagine). Residues 649-682 (AGNPELCVETPGSKCDPANIDASQEEIYQNELVE) form a C-cap/acidic domain region. Residues 687-707 (IWIFCLSAFISFDFGVLGIFC) traverse the membrane as a helical segment. Topologically, residues 708-720 (SARARSYILQTKA) are cytoplasmic.

The protein belongs to the RLP family. Parts of a tetrameric complex made of two CLV2/CRN heterodimers that can interact with CLV3 and CLE peptides. CLV2/CRN heterodimer interacts with CLV1 homodimers. Interacts with CRN; this dimer can interact with BAM3. Interacts with CLE14. As to expression, mostly expressed in apices (e.g. shoot apical meristem and flower buds), and, to a lower extent, in flowers, leaves, seedlings and siliques. Also expressed in the inner tissues of the proximal root meristem. Expressed throughout the vascular cylinder of root tips.

Its subcellular location is the cell membrane. The protein localises to the endoplasmic reticulum membrane. Functionally, involved in the perception of CLV3 and CLV3-like (CLE) peptides, that act as extracellular signals regulating meristems maintenance. Required for the sensing of the root CLE peptides (e.g. CLE8, CLE9/CLE10, CLE11, CLE13, CLE14, CLE16, CLE17, CLE18, CLE20, CLE21, CLE25, CLE26, CLE40, CLE41/CLE44 and CLE45), which also involves CRN and leads to root growth regulation, mostly in the phloem and protophloem. Involved in controlling the stem cell population size in shoot and root apical meristems, and during organ development. Promotes the formation of CLV1 multimers. In complex with CRN, perceives secreted CLV3-like effector proteins from plant-parasitic cyst nematodes as ligand mimics of the plant CLE signaling pathway. This recognition is required for proper feeding structure (syncytium) development and ultimately successful nematode infection. CLE14 perception by CLV2/CRN complex triggers root meristem differentiation. This chain is Receptor-like protein CLAVATA2, found in Arabidopsis thaliana (Mouse-ear cress).